The following is a 397-amino-acid chain: DNA replication and repair protein RecF (397 aa).

ATP is bound at residue 30–37 (GPNGQGKT).

The protein belongs to the RecF family.

Its subcellular location is the cytoplasm. The RecF protein is involved in DNA metabolism; it is required for DNA replication and normal SOS inducibility. RecF binds preferentially to single-stranded, linear DNA. It also seems to bind ATP. This Beutenbergia cavernae (strain ATCC BAA-8 / DSM 12333 / CCUG 43141 / JCM 11478 / NBRC 16432 / NCIMB 13614 / HKI 0122) protein is DNA replication and repair protein RecF.